Reading from the N-terminus, the 125-residue chain is uncharacterized protein (125 aa).

The protein localises to the plastid. The protein resides in the chloroplast. This is an uncharacterized protein from Guillardia theta (Cryptophyte).